The following is a 72-amino-acid chain: Translation initiation factor IF-1 (72 aa).

The S1-like domain maps to 1 to 72 (MTKEENIEMQ…SKGRIIFRSR (72 aa)).

This sequence belongs to the IF-1 family. As to quaternary structure, component of the 30S ribosomal translation pre-initiation complex which assembles on the 30S ribosome in the order IF-2 and IF-3, IF-1 and N-formylmethionyl-tRNA(fMet); mRNA recruitment can occur at any time during PIC assembly.

It is found in the cytoplasm. Functionally, one of the essential components for the initiation of protein synthesis. Stabilizes the binding of IF-2 and IF-3 on the 30S subunit to which N-formylmethionyl-tRNA(fMet) subsequently binds. Helps modulate mRNA selection, yielding the 30S pre-initiation complex (PIC). Upon addition of the 50S ribosomal subunit IF-1, IF-2 and IF-3 are released leaving the mature 70S translation initiation complex. This Wigglesworthia glossinidia brevipalpis protein is Translation initiation factor IF-1.